A 323-amino-acid polypeptide reads, in one-letter code: tRNA U34 carboxymethyltransferase (323 aa).

Residues K91, W105, K110, G130, 152–154 (DPT), 181–182 (IE), M196, Y200, and R315 contribute to the carboxy-S-adenosyl-L-methionine site.

The protein belongs to the class I-like SAM-binding methyltransferase superfamily. CmoB family. As to quaternary structure, homotetramer.

The enzyme catalyses carboxy-S-adenosyl-L-methionine + 5-hydroxyuridine(34) in tRNA = 5-carboxymethoxyuridine(34) in tRNA + S-adenosyl-L-homocysteine + H(+). Its function is as follows. Catalyzes carboxymethyl transfer from carboxy-S-adenosyl-L-methionine (Cx-SAM) to 5-hydroxyuridine (ho5U) to form 5-carboxymethoxyuridine (cmo5U) at position 34 in tRNAs. In Photorhabdus laumondii subsp. laumondii (strain DSM 15139 / CIP 105565 / TT01) (Photorhabdus luminescens subsp. laumondii), this protein is tRNA U34 carboxymethyltransferase.